The primary structure comprises 428 residues: Serine--tRNA ligase (428 aa).

231–233 (TAE) is a binding site for L-serine. 262-264 (RSE) provides a ligand contact to ATP. E285 contacts L-serine. Residue 349 to 352 (EISS) coordinates ATP. S385 serves as a coordination point for L-serine.

It belongs to the class-II aminoacyl-tRNA synthetase family. Type-1 seryl-tRNA synthetase subfamily. In terms of assembly, homodimer. The tRNA molecule binds across the dimer.

The protein localises to the cytoplasm. It catalyses the reaction tRNA(Ser) + L-serine + ATP = L-seryl-tRNA(Ser) + AMP + diphosphate + H(+). The catalysed reaction is tRNA(Sec) + L-serine + ATP = L-seryl-tRNA(Sec) + AMP + diphosphate + H(+). Its pathway is aminoacyl-tRNA biosynthesis; selenocysteinyl-tRNA(Sec) biosynthesis; L-seryl-tRNA(Sec) from L-serine and tRNA(Sec): step 1/1. Catalyzes the attachment of serine to tRNA(Ser). Is also able to aminoacylate tRNA(Sec) with serine, to form the misacylated tRNA L-seryl-tRNA(Sec), which will be further converted into selenocysteinyl-tRNA(Sec). This Cellvibrio japonicus (strain Ueda107) (Pseudomonas fluorescens subsp. cellulosa) protein is Serine--tRNA ligase.